Reading from the N-terminus, the 1379-residue chain is MARNLRNRRGSDVEDASNAKVGYETQIKDENGIIHTTTRSLRKINYAEIEKVFDFLEDDQVMDKDETPVDVTSDEHHNNNQKGDDEDDDVDLVSPHENARTNEELTNERNLRKRKAHDPEEDDESFHEEDVDDDEEEEEADEFEDEYLDEDSKDNNRRRRAADRKFVVPDPDDDEEYDEDDEEGDRISHSASSKRLKRANSRRTRSSRHPETPPPVRRALRSRTRHSRTSNEENDDENDNSRNEALTLADEIRELQEDSPIREKRFLRERTKPVNYKLPPPLTASNAEEFIDKNNNALSFHNPSPARRGRGGWNASQNSGPTRRLFPTGGPFGGNDVTTIFGKNTNFYNQVPSAFSDNNNNKLILDSDSSDDEILPLGVTPKTKKENTQKKKKKKPEIADLDPLGVDMNVNFDDIGGLDNYIDQLKEMVALPLLYPELYQNFNITPPRGVLFHGPPGTGKTLMARALAASCSSDERKITFFMRKGADILSKWVGEAERQLRLLFEEAKKHQPSIIFFDEIDGLAPVRSSKQEQIHASIVSTLLALMDGMDNRGQVIVIGATNRPDAVDPALRRPGRFDREFYFPLPDVKARFKILQIQTRKWSSPLSTNFIDKLAFLTKGYGGADLRSLCTEAALISIQRSFPQIYRSNDKLLVDPSKIKVKVSDFMLALKKIVPSSARSTGSSPQPLPELIKPLLADQLNNLKNKLDYMLNIKDTTFQRNTSLLQNFIDYEEYSGEEEEHDKYGGNEDTSSFRSYEFFESMAESQICKPRLLINGPKGNGQQYVGAAILNYLEEFNVQNLDLASLVSESSRTIEAAVVQSFMEAKKRQPSVVFIPNLDIWINTIPENVILVLSGLFRSLQSNEKILLLCLAENLDISEVKNGILSDFAFDKNIFQLHKPSKENITRYFSNLIELLKTKPSDIPMKKRRVKPLPELQKVTSNAAPTNFDENGEPLSEKVVLRRKLKSFQHQDMRLKNVLKIKLSGLMDLFKNRYKRFRKPPIDDAFLVHLFEPETSNDPNWQPAYIKDENMILEVSTGRKFFNMDLDIVEERLWNGYYSEPKQFLKDIELIYRDANTIGDRERVIKASEMFANAQMGIEEISTPDFIQECKATRQRDLERQELFLEDEEKRAAMELEAKEQSQENILQEPDLKDNKANEFGVAAGNQLQAQLQTTINTASIVNNSEVPQPIDTNLYKKEIPAAIPSAVDKEKAVIPEDSGANEEYTTELIQATCTSEITTDDDERARKEPKENEDSLQTQVTEENFSKIDANTNNINHVKEIQSVNKPNSLHETVEKRERSPIPKEVVEPEQGKKSDKELILTPEQIKKVSACLIEHCQNFTVSQLEDVHSSVAKIIWKSKSAWDKTGTVDEIIKFLSE.

2 disordered regions span residues 1 to 39 (MARN…TTTR) and 54 to 243 (DFLE…NSRN). An N-acetylalanine modification is found at A2. 2 positions are modified to phosphoserine: S11 and S17. Residues 61 to 78 (VMDKDETPVDVTSDEHHN) are compositionally biased toward basic and acidic residues. At S94 the chain carries Phosphoserine. A compositionally biased stretch (basic and acidic residues) spans 97-110 (ENARTNEELTNERN). Acidic residues-rich tracts occupy residues 119-152 (PEED…DEDS) and 170-184 (DPDD…DEEG). A compositionally biased stretch (basic residues) spans 192 to 207 (SSKRLKRANSRRTRSS). Position 212 is a phosphothreonine (T212). A compositionally biased stretch (basic residues) spans 218-228 (RALRSRTRHSR). T229 carries the phosphothreonine modification. A phosphoserine mark is found at S241, S259, and S285. Residues 302 to 330 (NPSPARRGRGGWNASQNSGPTRRLFPTGG) form a disordered region. 3 positions are modified to phosphoserine: S367, S369, and S370. The disordered stretch occupies residues 375-396 (LPLGVTPKTKKENTQKKKKKKP). An AAA-ATPase; required for its chromatin boundary function region spans residues 450–578 (VLFHGPPGTG…PALRRPGRFD (129 aa)). 454–461 (GPPGTGKT) serves as a coordination point for ATP. S735 bears the Phosphoserine mark. One can recognise a Bromo domain in the interval 974–1101 (RLKNVLKIKL…ANAQMGIEEI (128 aa)). S1142 carries the phosphoserine modification. Disordered regions lie at residues 1233 to 1274 (TCTS…ANTN) and 1291 to 1316 (LHET…GKKS). Basic and acidic residues predominate over residues 1244–1254 (ERARKEPKENE). S1256 is modified (phosphoserine). A compositionally biased stretch (polar residues) spans 1256–1274 (SLQTQVTEENFSKIDANTN). Basic and acidic residues predominate over residues 1293 to 1316 (ETVEKRERSPIPKEVVEPEQGKKS).

It belongs to the AAA ATPase family. As to quaternary structure, interacts with CSE4/CENP-A. Interacts with SCM3. Interacts with SPT16. Interacts with POB3. Interacts with the casein kinase II complex subunits CKA1, CKA2, CKB1 and CKB2. Interacts with RNA polymerase II. Interacts (via Bromo domain) with histone H3. Interacts (via Bromo domain) with histone H4. Post-translationally, phosphorylated by CDK1 and casein kinase II during S-phase, which leads to its eviction from histone gene promoters and promotes histone gene transcription.

It is found in the chromosome. Its subcellular location is the centromere. It localises to the nucleus. In terms of biological role, functions as an ATP-dependent nucleosome disassembly factor that helps evict canonical histone H3 from the 5'-end of genes upon their induction. Also contributes to kinetochore assembly by cooperating with SCM3 to load the histone H3 variant CSE4/CENP-A at centromeres. Provides a chromatin boundary function at the 5'-end of genes that restricts access by RTT106 and thus prevents ectopic spreading of repressive chromatin into coding regions. Also prevents heterochromatin spreading downstream of the silent mating-type locus HMR, this function is independent of the tRNA boundary element. Contributes to appropriate cell cycle regulation of histone gene expression by recruiting RNA polymerase II to histone genes, and subsequent CDK1- and casein kinase II-dependent eviction from chromatin is required to promote transcriptional elongation. This is ATPase histone chaperone YTA7 from Saccharomyces cerevisiae (strain ATCC 204508 / S288c) (Baker's yeast).